The sequence spans 322 residues: MSIDPANDSKLAPEANDATLGDVDRWIEQLKKCEPLSEADVEMLCDKAREVLCQENNVQPVRNPVTVCGDIHGQFHDLMELFKIGGDVPDMNYLFMGDYVDRGYHSVETVSLLVAMKLRYPNRITILRGNHESRQITQVYGFYDECLRKYGSANVWKHFTNLFDYFPLTALIEDRIFCLHGGLSPSIDSLDHVRTLDRVQEVPHEGPMCDLLWSDPDDRCGWGISPRGAGYTFGQDISETFNHANGLSLTARAHQLVMEGFNWAHDGDVVTIFSAPNYCYRCGNQAAILEVDDTMNQVFLQFDPAPREGEPVIARRTPDYFL.

Mn(2+) is bound by residues Asp-70, His-72, Asp-98, and Asn-130. Catalysis depends on His-131, which acts as the Proton donor. The Mn(2+) site is built by His-180 and His-254. The residue at position 322 (Leu-322) is a Leucine methyl ester.

The protein belongs to the PPP phosphatase family. PP-2A subfamily. It depends on Mn(2+) as a cofactor.

It catalyses the reaction O-phospho-L-seryl-[protein] + H2O = L-seryl-[protein] + phosphate. The catalysed reaction is O-phospho-L-threonyl-[protein] + H2O = L-threonyl-[protein] + phosphate. In terms of biological role, essential role in cell cycle control. PP2A may be involved in controlling the entry into mitosis, possibly acting as an inhibitor. In Schizosaccharomyces pombe (strain 972 / ATCC 24843) (Fission yeast), this protein is Major serine/threonine-protein phosphatase PP2A-2 catalytic subunit (ppa2).